The sequence spans 111 residues: MENIKSIFYFLLAGVFEIGGGYLIWLWLRQGKSLIYGIIGALVLILYGIIPTLQPENSNFGRVYATYGGIFIVLSILCGWKVDNIIPDKFDLIGGFIALIGVLIIMYAPRG.

4 helical membrane passes run Ile7–Trp27, Ser33–Leu53, Phe60–Trp80, and Ile85–Ile105.

The protein belongs to the UPF0060 family.

It localises to the cell membrane. In Clostridium perfringens (strain SM101 / Type A), this protein is UPF0060 membrane protein CPR_1507.